A 1432-amino-acid polypeptide reads, in one-letter code: Probable ATP-dependent RNA helicase spindle-E (1432 aa).

The Helicase ATP-binding domain occupies 125-292 (MKAIRENTVV…FATKNGIPPV (168 aa)). 138 to 145 (GETGCGKT) contacts ATP. The short motif at 238 to 241 (DEVH) is the DEAH box element. In terms of domain architecture, Helicase C-terminal spans 342 to 525 (VIDNMERRTE…SSVLKAKELN (184 aa)). A Tudor domain is found at 936 to 999 (AGSITKNLKL…RFMSNQLKRE (64 aa)).

This sequence belongs to the DEAD box helicase family. DEAH subfamily.

It localises to the cytoplasm. The enzyme catalyses ATP + H2O = ADP + phosphate + H(+). Its function is as follows. Probable ATP-binding RNA helicase which plays a central role during spermatogenesis and oogenesis by repressing transposable elements and preventing their mobilization, which is essential for the germline integrity. Acts via the piRNA metabolic process, which mediates the repression of transposable elements during meiosis by forming complexes composed of piRNAs and Piwi and govern the methylation and subsequent repression of transposons. Involved in the repression of LTR retrotransposon copia. Also involved in telomere regulation by repressing specialized telomeric retroelements HeT-A, TAHRE, and TART; Drosophila telomeres being maintained by transposition of specialized telomeric retroelements. Involved in telomeric trans-silencing, a repression mechanism by which a transposon or a transgene inserted in subtelomeric heterochromatin has the capacity to repress in trans in the female germline, a homologous transposon, or transgene located in euchromatin. Involved in the repression of testis-expressed Stellate genes by the homologous Su(Ste) repeats. Required for anteroposterior and dorsoventral axis formation during oogenesis. The chain is Probable ATP-dependent RNA helicase spindle-E (spn-E) from Drosophila willistoni (Fruit fly).